The sequence spans 516 residues: Probable serine/threonine-protein kinase ECU02_0550 (516 aa).

A Protein kinase domain is found at 4–230; it reads YKLRQVIGEG…ASEALMHRSF (227 aa). ATP-binding positions include 10-18 and Lys-32; that span reads IGEGASSTV. Catalysis depends on Asp-120, which acts as the Proton acceptor.

It belongs to the protein kinase superfamily. CAMK Ser/Thr protein kinase family.

It catalyses the reaction L-seryl-[protein] + ATP = O-phospho-L-seryl-[protein] + ADP + H(+). The catalysed reaction is L-threonyl-[protein] + ATP = O-phospho-L-threonyl-[protein] + ADP + H(+). The protein is Probable serine/threonine-protein kinase ECU02_0550 of Encephalitozoon cuniculi (strain GB-M1) (Microsporidian parasite).